Here is a 155-residue protein sequence, read N- to C-terminus: Protein-export protein SecB (155 aa).

The protein belongs to the SecB family. Homotetramer, a dimer of dimers. One homotetramer interacts with 1 SecA dimer.

Its subcellular location is the cytoplasm. One of the proteins required for the normal export of preproteins out of the cell cytoplasm. It is a molecular chaperone that binds to a subset of precursor proteins, maintaining them in a translocation-competent state. It also specifically binds to its receptor SecA. This is Protein-export protein SecB from Vibrio atlanticus (strain LGP32) (Vibrio splendidus (strain Mel32)).